We begin with the raw amino-acid sequence, 193 residues long: Probable nicotinate-nucleotide adenylyltransferase (193 aa).

The protein belongs to the NadD family.

It catalyses the reaction nicotinate beta-D-ribonucleotide + ATP + H(+) = deamido-NAD(+) + diphosphate. It functions in the pathway cofactor biosynthesis; NAD(+) biosynthesis; deamido-NAD(+) from nicotinate D-ribonucleotide: step 1/1. In terms of biological role, catalyzes the reversible adenylation of nicotinate mononucleotide (NaMN) to nicotinic acid adenine dinucleotide (NaAD). The sequence is that of Probable nicotinate-nucleotide adenylyltransferase from Endomicrobium trichonymphae.